We begin with the raw amino-acid sequence, 169 residues long: S-ribosylhomocysteine lyase (169 aa).

Fe cation is bound by residues His54, His58, and Cys128.

It belongs to the LuxS family. As to quaternary structure, homodimer. It depends on Fe cation as a cofactor.

The enzyme catalyses S-(5-deoxy-D-ribos-5-yl)-L-homocysteine = (S)-4,5-dihydroxypentane-2,3-dione + L-homocysteine. In terms of biological role, involved in the synthesis of autoinducer 2 (AI-2) which is secreted by bacteria and is used to communicate both the cell density and the metabolic potential of the environment. The regulation of gene expression in response to changes in cell density is called quorum sensing. Catalyzes the transformation of S-ribosylhomocysteine (RHC) to homocysteine (HC) and 4,5-dihydroxy-2,3-pentadione (DPD). This Shewanella frigidimarina (strain NCIMB 400) protein is S-ribosylhomocysteine lyase.